The following is a 295-amino-acid chain: Putative sugar uptake protein YxfA (295 aa).

10 helical membrane passes run 4–26 (VLLALVPMFAWGSIGFVANKFGG), 33–50 (LGMTLGAFVFALIVFLFR), 54–72 (LTWQIFLIGFIGGLLWAIG), 85–107 (VSVASPLSSGSQLVIGGLIGVFA), 117–135 (FILGFIAMAVLVVGFYFSA), 156–178 (ALTYSTLGYVIYVILFNNLAVLW), 188–206 (IILPMSVGMIFGALVMGRF), 213–235 (YVYQNMIVGAMWGVGNIFMLMAA), 241–263 (AIAFSFSQLGVIVSTIGGILFLG), and 270–291 (ELVYVGIGIVLFVTGAILLAIV).

The protein belongs to the GRP transporter (TC 2.A.7.5) family.

The protein resides in the cell membrane. This is Putative sugar uptake protein YxfA (yxfA) from Lactococcus lactis subsp. lactis (strain IL1403) (Streptococcus lactis).